Consider the following 543-residue polypeptide: ATP-dependent ubiquitin transferase-like protein Cap2 (543 aa).

Positions 1–159 are E2-like domain; the sequence is MSSAAAVADV…QNCIVAHANG (159 aa). Residue cysteine 84 is the For E2-like domain of the active site. Residues 160–305 form a linker domain region; sequence CPLWFITDNE…YLAQRNMPNS (146 aa). The interval 306-543 is adenylation plus E1-like domain; the sequence is KTLAGKNIAV…RDRECPLCNS (238 aa). Active-site for E1-like domain residues include cysteine 450 and cysteine 453.

The protein in the C-terminal section; belongs to the HesA/MoeB/ThiF family. In terms of assembly, forms a Cap2-CdnA complex. A Cap2 dimer is bound on either side by a CdnA monomer.

Functionally, CD-NTase priming component of a CBASS antiviral system. CBASS (cyclic oligonucleotide-based antiphage signaling system) provides immunity against bacteriophages. The CD-NTase protein (CdnA) synthesizes cyclic nucleotides in response to infection; these serve as specific second messenger signals. The signals activate a diverse range of effectors, leading to bacterial cell death and thus abortive phage infection. A type II-A(GA) CBASS system. In terms of biological role, acts as a protein transferase, conjugating CdnA, the CD-NTase, to unidentified target(s) in the cell probably via an E1-E2 ubiquitin transferase-like mechanism. This primes CdnA, upon phage infection CdnA activates and makes cyclic nucleotides. Protein conjugation requires ATP. The capV-cdnA-cap2-cap3 operon provides about 10(4)-fold protection in strain BWHPSA011 against infection by phage PaMx41. In P.aeruginosa strain PAO1 it confers protection against phages PaMx41 and JBD18 but not JBD67 (JBD18 and JBD67 do not replicate in BWHPSA011 / Pa011). When acb2 in JBD67 is deleted this CBASS operon then protects against JDB67 also. This CBASS system limits prophage induction of lysogenized JBD67 as well as viral lytic replication. The protein is ATP-dependent ubiquitin transferase-like protein Cap2 of Pseudomonas aeruginosa (strain BWHPSA011 / Pa011).